Consider the following 220-residue polypeptide: StAR-related lipid transfer protein 6 (220 aa).

An START domain is found at 1-208 (MDFKAIAQQT…AKDGIKAHRT (208 aa)).

In terms of biological role, may be involved in the intracellular transport of sterols or other lipids. May bind cholesterol or other sterols. The sequence is that of StAR-related lipid transfer protein 6 (STARD6) from Homo sapiens (Human).